Here is an 82-residue protein sequence, read N- to C-terminus: Cytotoxin 10 (82 aa).

The first 22 residues, M1–T22, serve as a signal peptide directing secretion. Intrachain disulfides connect C25–C43, C36–C60, C64–C75, and C76–C81.

It belongs to the three-finger toxin family. Short-chain subfamily. Type IA cytotoxin sub-subfamily. Monomer in solution; Homodimer and oligomer in the presence of negatively charged lipids forming a pore with a size ranging between 20 and 30 Angstroms. Expressed by the venom gland.

It is found in the secreted. Its subcellular location is the target cell membrane. In terms of biological role, shows cytolytic activity on many different cells by forming pore in lipid membranes. In vivo, increases heart rate or kills the animal by cardiac arrest. In addition, it binds to heparin with high affinity, interacts with Kv channel-interacting protein 1 (KCNIP1) in a calcium-independent manner, and binds to integrin alpha-V/beta-3 (ITGAV/ITGB3) with moderate affinity. The chain is Cytotoxin 10 from Naja atra (Chinese cobra).